Consider the following 257-residue polypeptide: Histidine/lysine/arginine/ornithine transport ATP-binding protein HisP (257 aa).

Residues 6 to 252 (LNVIDLHKRY…PQSPRLQRFL (247 aa)) enclose the ABC transporter domain. Residues Ser-40, Gly-41, Gly-43, Lys-44, Ser-45, and Thr-46 each contribute to the ATP site.

This sequence belongs to the ABC transporter superfamily. The HisPMQJ complex is composed of two ATP-binding proteins (HisP), two transmembrane proteins (HisM and HisQ) and a solute-binding protein (HisJ). The HisPMQ-ArgT complex is composed of two ATP-binding proteins (HisP), two transmembrane proteins (HisM and HisQ) and a solute-binding protein (ArgT).

It is found in the cell inner membrane. It carries out the reaction a polar amino acid(out) + ATP + H2O = a polar amino acid(in) + ADP + phosphate + H(+). The enzyme catalyses L-histidine(out) + ATP + H2O = L-histidine(in) + ADP + phosphate + H(+). The catalysed reaction is L-lysine(out) + ATP + H2O = L-lysine(in) + ADP + phosphate + H(+). It catalyses the reaction L-arginine(out) + ATP + H2O = L-arginine(in) + ADP + phosphate + H(+). It carries out the reaction L-ornithine(out) + ATP + H2O = L-ornithine(in) + ADP + phosphate + H(+). Part of the ABC transporter complex HisPMQJ involved in histidine transport. Is also part of the ABC transporter complex HisPMQ-ArgT involved in lysine/arginine/ornithine transport. Shows ATPase activity. Responsible for energy coupling to the transport system. This is Histidine/lysine/arginine/ornithine transport ATP-binding protein HisP from Escherichia coli (strain K12).